The following is a 129-amino-acid chain: Large ribosomal subunit protein bL19 (129 aa).

Belongs to the bacterial ribosomal protein bL19 family.

Functionally, this protein is located at the 30S-50S ribosomal subunit interface and may play a role in the structure and function of the aminoacyl-tRNA binding site. The sequence is that of Large ribosomal subunit protein bL19 from Rhizorhabdus wittichii (strain DSM 6014 / CCUG 31198 / JCM 15750 / NBRC 105917 / EY 4224 / RW1) (Sphingomonas wittichii).